The following is a 428-amino-acid chain: Protein clpf-1 (428 aa).

ATP is bound by residues glutamate 16, arginine 56, and 124 to 129 (DVGKTT).

It belongs to the Clp1 family. Clp1 subfamily.

The protein localises to the nucleus. In terms of biological role, required for endonucleolytic cleavage during polyadenylation-dependent pre-mRNA 3'-end formation. The polypeptide is Protein clpf-1 (Caenorhabditis elegans).